A 1801-amino-acid chain; its full sequence is Focadhesin (1801 aa).

Lysine 819 is subject to N6-acetyllysine.

In terms of assembly, interacts with VCL. In terms of tissue distribution, ubiquitous. High expression in brain followed by testis, muscle, pancreas, heart, ovary, small intestine, placenta, prostate, thymus, kidney, colon, liver, lung, spleen and leukocytes. Expression is reduced in most glioblastomas and all glioblastoma cell lines.

The protein localises to the cell junction. It localises to the focal adhesion. The protein resides in the cytoplasm. It is found in the cytosol. In terms of biological role, required for the maintenance of SKIC2 and SKIC3 proteostatic levels in the liver. May be involved in the regulation of RNA degradation by the exosome complex. Potential tumor suppressor in gliomas. The chain is Focadhesin from Homo sapiens (Human).